Consider the following 384-residue polypeptide: 8-amino-7-oxononanoate synthase (384 aa).

Arg21 serves as a coordination point for substrate. 108-109 (GF) provides a ligand contact to pyridoxal 5'-phosphate. Substrate is bound at residue His133. Ser179, His207, and Thr233 together coordinate pyridoxal 5'-phosphate. Lys236 bears the N6-(pyridoxal phosphate)lysine mark. Thr352 is a substrate binding site.

This sequence belongs to the class-II pyridoxal-phosphate-dependent aminotransferase family. BioF subfamily. As to quaternary structure, homodimer. Requires pyridoxal 5'-phosphate as cofactor.

It catalyses the reaction 6-carboxyhexanoyl-[ACP] + L-alanine + H(+) = (8S)-8-amino-7-oxononanoate + holo-[ACP] + CO2. Its pathway is cofactor biosynthesis; biotin biosynthesis. Catalyzes the decarboxylative condensation of pimeloyl-[acyl-carrier protein] and L-alanine to produce 8-amino-7-oxononanoate (AON), [acyl-carrier protein], and carbon dioxide. This is 8-amino-7-oxononanoate synthase from Shigella boydii serotype 18 (strain CDC 3083-94 / BS512).